Consider the following 356-residue polypeptide: Carbohydrate sulfotransferase 10 (356 aa).

The Cytoplasmic portion of the chain corresponds to 1–6 (MHHQWL). Residues 7–27 (LLAACFWVIFMFMVASKFITL) form a helical; Signal-anchor for type II membrane protein membrane-spanning segment. The Lumenal segment spans residues 28–356 (TFKDPDVYSA…GYQKPDFLLN (329 aa)). A glycan (N-linked (GlcNAc...) asparagine) is linked at Asn-99. 3'-phosphoadenylyl sulfate-binding positions include 127–133 (PKVGNTQ) and 189–197 (RDPFERLIS). 2 N-linked (GlcNAc...) asparagine glycosylation sites follow: Asn-228 and Asn-316.

This sequence belongs to the sulfotransferase 2 family.

It localises to the golgi apparatus membrane. It catalyses the reaction 3-O-{beta-D-GlcA-(1-&gt;[3)-alpha-D-Xyl-(1-&gt;3)-beta-D-GlcA-(1-&gt;](n)-4)-beta-D-Xyl-(1-&gt;4)-Rib-ol-P-Rib-ol-P-3-beta-D-GalNAc-(1-&gt;3)-beta-D-GlcNAc-(1-&gt;4)-O-6-P-alpha-D-Man}-L-Thr-[protein] + 3'-phosphoadenylyl sulfate = 3-O-{O-3-S-beta-D-GlcA-(1-&gt;[3)-alpha-D-Xyl-(1-&gt;3)-beta-D-GlcA-(1-&gt;](n)-4)-beta-D-Xyl-(1-&gt;4)-Rib-ol-P-Rib-ol-P-3-beta-D-GalNAc-(1-&gt;3)-beta-D-GlcNAc-(1-&gt;4)-O-6-P-alpha-D-Man}-L-Thr-[protein] + adenosine 3',5'-bisphosphate + H(+). The catalysed reaction is 17beta-estradiol 3-O-(beta-D-glucuronate) + 3'-phosphoadenylyl sulfate = 17beta-estradiol 3-O-(3-sulfo-beta-D-glucuronate) + adenosine 3',5'-bisphosphate + H(+). It carries out the reaction 17beta-estradiol 3-O-(beta-D-glucuronate) 17-sulfate + 3'-phosphoadenylyl sulfate = 17beta-estradiol 3-O-(3-sulfo-beta-D-glucuronate) 17-sulfate + adenosine 3',5'-bisphosphate + H(+). The enzyme catalyses 17beta-estradiol 17-O-(beta-D-glucuronate) + 3'-phosphoadenylyl sulfate = 17beta-estradiol 17-O-(3-sulfo-beta-D-glucuronate) + adenosine 3',5'-bisphosphate + H(+). It catalyses the reaction 16alpha,17beta-estriol 3-O-(beta-D-glucuronate) + 3'-phosphoadenylyl sulfate = 16alpha,17beta-estriol 3-O-(3-sulfo-beta-D-glucuronate) + adenosine 3',5'-bisphosphate + H(+). The catalysed reaction is 16alpha,17beta-estriol 16-O-(beta-D-glucuronate) + 3'-phosphoadenylyl sulfate = 16alpha,17beta-estriol 16-O-(3-sulfo-beta-D-glucuronate) + adenosine 3',5'-bisphosphate + H(+). It carries out the reaction 16alpha,17beta-estriol 17-O-(beta-D-glucuronate) + 3'-phosphoadenylyl sulfate = 16alpha,17beta-estriol 17-O-(3-sulfo-beta-D-glucuronate) + adenosine 3',5'-bisphosphate + H(+). The enzyme catalyses estrone 3-O-(beta-D-glucuronate) + 3'-phosphoadenylyl sulfate = estrone 3-O-(3-sulfo-beta-D-glucuronate) + adenosine 3',5'-bisphosphate + H(+). It catalyses the reaction 3alpha,20alpha-dihydroxy-5beta-pregnane 3-O-(beta-D-glucuronate) + 3'-phosphoadenylyl sulfate = 3alpha,20alpha-dihydroxy-5beta-pregnane 3-O-(3-sulfo-beta-D-glucuronate) + adenosine 3',5'-bisphosphate + H(+). The catalysed reaction is testosterone 17-O-(beta-D-glucuronate) + 3'-phosphoadenylyl sulfate = testosterone 17-O-(3-sulfo-beta-D-glucuronate) + adenosine 3',5'-bisphosphate + H(+). It carries out the reaction 3beta-androst-5-en-17-one 3-O-(beta-D-glucuronate) + 3'-phosphoadenylyl sulfate = 3beta-androst-5-en-17-one 3-O-(3-sulfo-beta-D-glucuronate) + adenosine 3',5'-bisphosphate + H(+). The enzyme catalyses 3alpha,17alpha-dihydroxy-5beta-androstane-11-one-17beta-carboxylate 3-O-(beta-D-glucuronate) + 3'-phosphoadenylyl sulfate = 3alpha,17alpha-dihydroxy-5beta-androstane-11-one-17beta-carboxylate 3-O-(3-sulfo-beta-D-glucuronate) + adenosine 3',5'-bisphosphate + H(+). It catalyses the reaction 3alpha-hydroxyetiocholan-17-one 3-O-(beta-D-glucuronate) + 3'-phosphoadenylyl sulfate = 3alpha-hydroxyetiocholan-17-one 3-O-(3-sulfo-beta-D-glucuronate) + adenosine 3',5'-bisphosphate + H(+). The protein operates within steroid metabolism. It functions in the pathway protein modification; carbohydrate sulfation. Its function is as follows. Catalyzes the transfer of sulfate from 3'-phosphoadenylyl sulfate (PAPS) to position 3 of terminal glucuronic acid of both protein- and lipid-linked oligosaccharides. Participates in biosynthesis of HNK-1 carbohydrate structure 3-O-sulfo-beta-D-GlcA-(1-&gt;3)-beta-D-Gal-(1-&gt;4)-D-GlcNAc-R, a sulfated glucuronyl-lactosaminyl residue carried by many neural recognition molecules, which is involved in cell interactions during ontogenetic development and in synaptic plasticity in the adult. May be indirectly involved in synapse plasticity of the hippocampus, via its role in HNK-1 biosynthesis. Sulfates terminal glucuronyl residue of the laminin globular (LG)-domain binding epitope on DAG1/alpha-dystroglycan and prevents further polymerization by LARGE1 glycosyltransferase. Likely defines the chain length of LG epitope, conferring binding specificity to extracellular matrix components. Plays a role in down-regulating the steroid hormones. Sulfates glucuronidated estrogens and androgens with an impact in hormone cycle and fertility. Has a preference for glucuronyl moiety at the 3-hydroxyl group of a sterol ring rather than the 17-hydroxyl group, showing high catalytic efficiency for 17beta-estradiol 3-O-(beta-D-glucuronate) and dehydroepiandrosterone 3-O-(beta-D-glucuronate) hormones. The polypeptide is Carbohydrate sulfotransferase 10 (CHST10) (Pongo abelii (Sumatran orangutan)).